The sequence spans 219 residues: Uracil-DNA glycosylase (219 aa).

The Proton acceptor role is filled by D63.

It belongs to the uracil-DNA glycosylase (UDG) superfamily. UNG family.

It localises to the cytoplasm. It carries out the reaction Hydrolyzes single-stranded DNA or mismatched double-stranded DNA and polynucleotides, releasing free uracil.. Functionally, excises uracil residues from the DNA which can arise as a result of misincorporation of dUMP residues by DNA polymerase or due to deamination of cytosine. The protein is Uracil-DNA glycosylase of Mesomycoplasma hyopneumoniae (strain 7448) (Mycoplasma hyopneumoniae).